The chain runs to 565 residues: Amino-acid acetyltransferase, mitochondrial (565 aa).

Residues 38–58 (DIATATPAATPSDGAQPPAQN) form a disordered region. Positions 352-540 (LPVRVLRSME…EFGGGRLVRV (189 aa)) constitute an N-acetyltransferase domain.

It belongs to the acetyltransferase family.

The protein resides in the mitochondrion. It catalyses the reaction L-glutamate + acetyl-CoA = N-acetyl-L-glutamate + CoA + H(+). Its pathway is amino-acid biosynthesis; L-arginine biosynthesis; N(2)-acetyl-L-ornithine from L-glutamate: step 1/4. Functionally, N-acetylglutamate synthase involved in arginine biosynthesis. The protein is Amino-acid acetyltransferase, mitochondrial (ARG2) of Cryptococcus neoformans var. neoformans serotype D (strain B-3501A) (Filobasidiella neoformans).